The following is a 108-amino-acid chain: Parvalbumin beta (108 aa).

A1 is subject to N-acetylalanine. 2 EF-hand domains span residues 38–73 (KSNE…FSAG) and 77–108 (LTKT…LVKA). Ca(2+) contacts are provided by D51, D53, S55, F57, E59, E62, D90, D92, D94, K96, and E101.

It belongs to the parvalbumin family.

In muscle, parvalbumin is thought to be involved in relaxation after contraction. It binds two calcium ions. The sequence is that of Parvalbumin beta from Latimeria chalumnae (Coelacanth).